The sequence spans 35 residues: Conotoxin Cl6.16 (35 aa).

Intrachain disulfides connect cysteine 10/cysteine 22, cysteine 16/cysteine 27, and cysteine 21/cysteine 34.

As to expression, expressed by the venom duct.

The protein resides in the secreted. In Californiconus californicus (California cone), this protein is Conotoxin Cl6.16.